The chain runs to 287 residues: Large ribosomal subunit protein uL2 (287 aa).

Residues 221–287 (RGSVMNPCDH…SKRSRGGRDS (67 aa)) are disordered. Basic residues predominate over residues 258–287 (KTRKRNKPSNKFVLRKRRKTSKRSRGGRDS).

This sequence belongs to the universal ribosomal protein uL2 family. In terms of assembly, part of the 50S ribosomal subunit. Forms a bridge to the 30S subunit in the 70S ribosome.

Functionally, one of the primary rRNA binding proteins. Required for association of the 30S and 50S subunits to form the 70S ribosome, for tRNA binding and peptide bond formation. It has been suggested to have peptidyltransferase activity; this is somewhat controversial. Makes several contacts with the 16S rRNA in the 70S ribosome. The polypeptide is Large ribosomal subunit protein uL2 (Synechococcus sp. (strain RCC307)).